A 274-amino-acid chain; its full sequence is 4-diphosphocytidyl-2-C-methyl-D-erythritol kinase (274 aa).

Lys-10 is a catalytic residue. 101–111 (PTQAGLGGGSA) lines the ATP pocket. The active site involves Asp-143.

This sequence belongs to the GHMP kinase family. IspE subfamily.

The enzyme catalyses 4-CDP-2-C-methyl-D-erythritol + ATP = 4-CDP-2-C-methyl-D-erythritol 2-phosphate + ADP + H(+). It participates in isoprenoid biosynthesis; isopentenyl diphosphate biosynthesis via DXP pathway; isopentenyl diphosphate from 1-deoxy-D-xylulose 5-phosphate: step 3/6. Its function is as follows. Catalyzes the phosphorylation of the position 2 hydroxy group of 4-diphosphocytidyl-2C-methyl-D-erythritol. The protein is 4-diphosphocytidyl-2-C-methyl-D-erythritol kinase of Helicobacter pylori (strain HPAG1).